The sequence spans 118 residues: MARIAGINIPDQKHTVIALTAIFGIGKTRSQAICAAAGIAENVKISELSEEQIETLRDEVAKYTVEGDLRREVTLSIKRLMDIGCYRGLRHRRGLPVRGQRTKTNARTRKGPRKPIKK.

The disordered stretch occupies residues 94–118 (GLPVRGQRTKTNARTRKGPRKPIKK).

Belongs to the universal ribosomal protein uS13 family. Part of the 30S ribosomal subunit. Forms a loose heterodimer with protein S19. Forms two bridges to the 50S subunit in the 70S ribosome.

Located at the top of the head of the 30S subunit, it contacts several helices of the 16S rRNA. In the 70S ribosome it contacts the 23S rRNA (bridge B1a) and protein L5 of the 50S subunit (bridge B1b), connecting the 2 subunits; these bridges are implicated in subunit movement. Contacts the tRNAs in the A and P-sites. This is Small ribosomal subunit protein uS13 from Edwardsiella ictaluri (strain 93-146).